Reading from the N-terminus, the 111-residue chain is Ribonuclease P protein component (111 aa).

It belongs to the RnpA family. As to quaternary structure, consists of a catalytic RNA component (M1 or rnpB) and a protein subunit.

It catalyses the reaction Endonucleolytic cleavage of RNA, removing 5'-extranucleotides from tRNA precursor.. In terms of biological role, RNaseP catalyzes the removal of the 5'-leader sequence from pre-tRNA to produce the mature 5'-terminus. It can also cleave other RNA substrates such as 4.5S RNA. The protein component plays an auxiliary but essential role in vivo by binding to the 5'-leader sequence and broadening the substrate specificity of the ribozyme. This chain is Ribonuclease P protein component, found in Alkaliphilus metalliredigens (strain QYMF).